A 649-amino-acid polypeptide reads, in one-letter code: MSQYAAELCKLLITDNFGELYAPLPRIVQNTRLSPRQVRHGLAVLIQQRLIYHYTSLDDGIAYYEASWMTAYNLVRSGRILQLVEEKLGKYVAKVLSTILYHGHVRISYLETLPELRPQVSSKAGKLVAANGLNGIHSDEEEEEEDAHVTDQGEQEEYASGRPENSVDSDYGKRSASQLHPALRSLAAYGYIMRVRDAHFQSPADLVEDAERAVSSRSDVRGLKGKKFQEAIDAGVETYIKEKTDGTIPQGPLAGALPRGIKRRAGQLATNSSSKRVKLEHLPEGDEDIDDDDFYGDDYVDGDNTLMDPNMIISVNYQKFEVALRNRRLARLAEQCTSRVTSQVYEALLGRIELKTPACRKQPERVPEGEENEQYSVAIPLHTILDDIDPDLDLSESMAGVDPANLLSNGHMGLNGDGNGDDDDDESTGASTGIWNRRRNRVYELEQHLSLLAQEPNIFSTRSMQSGMITWAVEFRHLARRLRHLEIERIIESRFGTIAVRVIRVLAAKGKLDEKRLQEISLMASKELRQVLARMEAAGFVDLQEVPRDAQRQPSRTMYLWFFDLDRVARMVLEDTYKCMSRCLQRIGVERNKLKLFLEKTERTDVKGNEEKYLSPAELKTLKEWRDKEALLLGEVGRLDELVSVLRDY.

Disordered regions lie at residues 135–176 (GIHS…KRSA), 266–293 (GQLA…DDDD), and 409–432 (NGHM…GAST). Positions 576 to 597 (TYKCMSRCLQRIGVERNKLKLF) are leucine-zipper.

Belongs to the RNA polymerase beta chain family. Component of the RNA polymerase III (Pol III) complex consisting of 17 subunits.

The protein localises to the nucleus. In terms of biological role, DNA-dependent RNA polymerase catalyzes the transcription of DNA into RNA using the four ribonucleoside triphosphates as substrates. Specific core component of RNA polymerase III which synthesizes small RNAs, such as 5S rRNA and tRNAs. This is DNA-directed RNA polymerase III subunit rpc3 (RPC82) from Ajellomyces capsulatus (strain NAm1 / WU24) (Darling's disease fungus).